The chain runs to 174 residues: Putative FAS1 domain-containing protein 096L (174 aa).

Residues proline 36 to tyrosine 171 enclose the FAS1 domain.

The polypeptide is Putative FAS1 domain-containing protein 096L (Acheta domesticus (House cricket)).